We begin with the raw amino-acid sequence, 74 residues long: Brevinin-2Ta (74 aa).

Residues 1-22 form the signal peptide; sequence MFTMKKSLLLFFFLGTISLSLC. Positions 23-41 are excised as a propeptide; that stretch reads QEERNADEDDGEMTEEEKR. Cys68 and Cys74 are disulfide-bonded.

It belongs to the frog skin active peptide (FSAP) family. Brevinin subfamily. As to expression, expressed by the skin glands.

It localises to the secreted. Antimicrobial peptide. This is Brevinin-2Ta from Rana temporaria (European common frog).